Consider the following 91-residue polypeptide: MSRSIKKGFFVDYHLLEKIEKANKAGAKKPIQTWSRRSTITPDFVGHTFSVHNGKAFIAVYVTENMVGHKLGEFALTRIFKAHGGMTRKEI.

The protein belongs to the universal ribosomal protein uS19 family.

Its function is as follows. Protein S19 forms a complex with S13 that binds strongly to the 16S ribosomal RNA. This chain is Small ribosomal subunit protein uS19, found in Opitutus terrae (strain DSM 11246 / JCM 15787 / PB90-1).